The sequence spans 309 residues: Methionyl-tRNA formyltransferase (309 aa).

110-113 (SLLP) is a binding site for (6S)-5,6,7,8-tetrahydrofolate.

The protein belongs to the Fmt family.

It catalyses the reaction L-methionyl-tRNA(fMet) + (6R)-10-formyltetrahydrofolate = N-formyl-L-methionyl-tRNA(fMet) + (6S)-5,6,7,8-tetrahydrofolate + H(+). Functionally, attaches a formyl group to the free amino group of methionyl-tRNA(fMet). The formyl group appears to play a dual role in the initiator identity of N-formylmethionyl-tRNA by promoting its recognition by IF2 and preventing the misappropriation of this tRNA by the elongation apparatus. The polypeptide is Methionyl-tRNA formyltransferase (Caldanaerobacter subterraneus subsp. tengcongensis (strain DSM 15242 / JCM 11007 / NBRC 100824 / MB4) (Thermoanaerobacter tengcongensis)).